A 1064-amino-acid polypeptide reads, in one-letter code: MPKRNDIKKIMIIGSGPIIIGQAAEFDYAGTQACLALKEEGYEVVLVNSNPATIMTDREIADTVYIEPITLEFVSKILRKERPDALLPTLGGQTGLNMAMELSKTGILEELNVELLGTKLSAIDQAEDRELFKELCESINEPLCASDIATTVEEAINIADKIGYPIIVRPAFTMGGTGGGICDTEEELREIVANGLKLSPVTQCLIEESIAGYKEIEYEVMRDSADNAIVVCNMENFDPVGVHTGDSIVFAPSQTLSDNEYQMLRDASLNIIRALKIEGGCNVQLALDPNSYEYRVIEVNPRVSRSSALASKATGYPIAKMSAKIAIGMTLDEIINPVTNKTYAMFEPALDYVVAKIARFPFDKFENGDRHLGTQMKATGEVMAIGRNIEESLLKAVRSLEIGVFHNEMTEAIEADDEKLYEKMVKTQDDRLFYVSEAIRRGIPIEEIADLTKIDIFFLDKLLYIVEIENQLKVNIFEPELLKTAKKNGFSDREIAKLWNVTPEEVRRRRQENKIIPVYKMVDTCAAEFESSTPYFYSTYEWENESKRSDKEKIIVLGSGPIRIGQGVEFDYATVHCVKAIQALGKEAIVINSNPETVSTDFSISDKLYFEPLTFEDVMNVIDLEEPLGVIVQFGGQTAINLAEPLSKAGVKILGTQVEDLDRAEDRDLFEKALQDLDIPQPPGATATNEEEAVANANKIGYPVLIRPSFVLGGRAMEIINNEKDLRDYMNRAVKASPEHPVLVDSYLQGQECEVDAICDGKEVLLPGIMEHIERAGVHSGDSMAVYPPQNLSQAIIDTIVDYTKRLAIGLNCIGMMNIQFVIYEEQVYVIEVNPRASRTVPFLSKVTNIPMAQLATQMILGENLKDLGYEAGLAPTPDMVHVKAPVFSFTKLAKVDSLLGPEMKSTGEAMGSDVTLEKALYKSFEAAKLHMADYGSVLFTVADEDKEETLALAKDFAEIGYSLVATAGTAAFLKENGLYVREVEKLAGGEDEEGTLVEDIRQGRVQAVVNTMGNTRASLTTATDGFRIRQEAISRGIPLFTSLDTVAAILKVMQSRSFTTKNI.

Positions 1–401 (MPKRNDIKKI…SLLKAVRSLE (401 aa)) are carboxyphosphate synthetic domain. ATP is bound by residues Arg-129, Arg-169, Gly-175, Gly-176, Glu-208, Ile-210, Glu-215, Gly-241, Val-242, His-243, Gln-284, and Glu-298. One can recognise an ATP-grasp 1 domain in the interval 133-327 (KELCESINEP…IAKMSAKIAI (195 aa)). 3 residues coordinate Mg(2+): Gln-284, Glu-298, and Asn-300. Mn(2+) is bound by residues Gln-284, Glu-298, and Asn-300. An oligomerization domain region spans residues 402 to 546 (IGVFHNEMTE…YSTYEWENES (145 aa)). Residues 547–929 (KRSDKEKIIV…ALYKSFEAAK (383 aa)) form a carbamoyl phosphate synthetic domain region. Residues 671–861 (EKALQDLDIP…MAQLATQMIL (191 aa)) enclose the ATP-grasp 2 domain. Arg-707, Ser-746, Leu-748, Glu-752, Gly-777, Val-778, His-779, Ser-780, Gln-820, and Glu-832 together coordinate ATP. The Mg(2+) site is built by Gln-820, Glu-832, and Asn-834. Mn(2+)-binding residues include Gln-820, Glu-832, and Asn-834. An MGS-like domain is found at 930–1064 (LHMADYGSVL…QSRSFTTKNI (135 aa)). The segment at 930 to 1064 (LHMADYGSVL…QSRSFTTKNI (135 aa)) is allosteric domain.

The protein belongs to the CarB family. Composed of two chains; the small (or glutamine) chain promotes the hydrolysis of glutamine to ammonia, which is used by the large (or ammonia) chain to synthesize carbamoyl phosphate. Tetramer of heterodimers (alpha,beta)4. Requires Mg(2+) as cofactor. Mn(2+) serves as cofactor.

It carries out the reaction hydrogencarbonate + L-glutamine + 2 ATP + H2O = carbamoyl phosphate + L-glutamate + 2 ADP + phosphate + 2 H(+). It catalyses the reaction hydrogencarbonate + NH4(+) + 2 ATP = carbamoyl phosphate + 2 ADP + phosphate + 2 H(+). It functions in the pathway amino-acid biosynthesis; L-arginine biosynthesis; carbamoyl phosphate from bicarbonate: step 1/1. The protein operates within pyrimidine metabolism; UMP biosynthesis via de novo pathway; (S)-dihydroorotate from bicarbonate: step 1/3. Functionally, large subunit of the glutamine-dependent carbamoyl phosphate synthetase (CPSase). CPSase catalyzes the formation of carbamoyl phosphate from the ammonia moiety of glutamine, carbonate, and phosphate donated by ATP, constituting the first step of 2 biosynthetic pathways, one leading to arginine and/or urea and the other to pyrimidine nucleotides. The large subunit (synthetase) binds the substrates ammonia (free or transferred from glutamine from the small subunit), hydrogencarbonate and ATP and carries out an ATP-coupled ligase reaction, activating hydrogencarbonate by forming carboxy phosphate which reacts with ammonia to form carbamoyl phosphate. This is Carbamoyl phosphate synthase large chain from Lactococcus lactis subsp. cremoris (strain MG1363).